A 412-amino-acid chain; its full sequence is MGPRFQPDDTLYKRRNTLKVEYVPDDIVGRDNEIEEYEAALQPIINGEYPDNIFIYGKTGVGKTAVTNFLLNELRESADHFEVDLTVISLNCDGLSTSYQAAISLVNNLRGHENHIAETGHPQSKVYRLLWNELNKLSGSVIIVLDEIDHITDDTFLYQITRADNNGYIDNIQLGVIGISNDSTFREQLDAKVQSSLCETEISFPPYGTEELQKVLEQRAEIAFHESALEDGVIPLCAALGRQDGGDARRAITLLRKAGDLARTENANSVTTDHVERAQEKLEAQQSMDIMRDLTEHEQLTLYALTTLAAEGETPARSRIVYQRYKELCEFQGREPRTARRMRSFLSDFEILNLTLSEMEHRGQDGGTYRQHELNRDIATVVDALQTIIGEFGAHQSIIEYLPDSGEEFATM.

ATP is bound by residues Val-61 to Ala-65, Tyr-207, and Arg-219.

This sequence belongs to the CDC6/cdc18 family.

Functionally, involved in regulation of DNA replication. This is ORC1-type DNA replication protein 2 (cdc6b) from Haloarcula marismortui (strain ATCC 43049 / DSM 3752 / JCM 8966 / VKM B-1809) (Halobacterium marismortui).